Reading from the N-terminus, the 324-residue chain is Carbonic anhydrase, chloroplastic (324 aa).

It belongs to the beta-class carbonic anhydrase family. Homohexamer.

The protein localises to the plastid. The protein resides in the chloroplast stroma. The enzyme catalyses hydrogencarbonate + H(+) = CO2 + H2O. Its function is as follows. Reversible hydration of carbon dioxide. This chain is Carbonic anhydrase, chloroplastic, found in Hordeum vulgare (Barley).